The following is a 156-amino-acid chain: Small ribosomal subunit protein uS7 (156 aa).

Belongs to the universal ribosomal protein uS7 family. In terms of assembly, part of the 30S ribosomal subunit. Contacts proteins S9 and S11.

In terms of biological role, one of the primary rRNA binding proteins, it binds directly to 16S rRNA where it nucleates assembly of the head domain of the 30S subunit. Is located at the subunit interface close to the decoding center, probably blocks exit of the E-site tRNA. The chain is Small ribosomal subunit protein uS7 from Citrifermentans bemidjiense (strain ATCC BAA-1014 / DSM 16622 / JCM 12645 / Bem) (Geobacter bemidjiensis).